We begin with the raw amino-acid sequence, 316 residues long: 4-hydroxy-3-methylbut-2-enyl diphosphate reductase (316 aa).

[4Fe-4S] cluster is bound at residue C12. (2E)-4-hydroxy-3-methylbut-2-enyl diphosphate contacts are provided by H43 and H81. The dimethylallyl diphosphate site is built by H43 and H81. Positions 43 and 81 each coordinate isopentenyl diphosphate. A [4Fe-4S] cluster-binding site is contributed by C103. H131 is a binding site for (2E)-4-hydroxy-3-methylbut-2-enyl diphosphate. H131 is a dimethylallyl diphosphate binding site. Residue H131 participates in isopentenyl diphosphate binding. The Proton donor role is filled by E133. (2E)-4-hydroxy-3-methylbut-2-enyl diphosphate is bound at residue T170. A [4Fe-4S] cluster-binding site is contributed by C198. S226, N228, and S271 together coordinate (2E)-4-hydroxy-3-methylbut-2-enyl diphosphate. Dimethylallyl diphosphate contacts are provided by S226, N228, and S271. Isopentenyl diphosphate contacts are provided by S226, N228, and S271.

Belongs to the IspH family. [4Fe-4S] cluster serves as cofactor.

The catalysed reaction is isopentenyl diphosphate + 2 oxidized [2Fe-2S]-[ferredoxin] + H2O = (2E)-4-hydroxy-3-methylbut-2-enyl diphosphate + 2 reduced [2Fe-2S]-[ferredoxin] + 2 H(+). It carries out the reaction dimethylallyl diphosphate + 2 oxidized [2Fe-2S]-[ferredoxin] + H2O = (2E)-4-hydroxy-3-methylbut-2-enyl diphosphate + 2 reduced [2Fe-2S]-[ferredoxin] + 2 H(+). Its pathway is isoprenoid biosynthesis; dimethylallyl diphosphate biosynthesis; dimethylallyl diphosphate from (2E)-4-hydroxy-3-methylbutenyl diphosphate: step 1/1. It functions in the pathway isoprenoid biosynthesis; isopentenyl diphosphate biosynthesis via DXP pathway; isopentenyl diphosphate from 1-deoxy-D-xylulose 5-phosphate: step 6/6. Functionally, catalyzes the conversion of 1-hydroxy-2-methyl-2-(E)-butenyl 4-diphosphate (HMBPP) into a mixture of isopentenyl diphosphate (IPP) and dimethylallyl diphosphate (DMAPP). Acts in the terminal step of the DOXP/MEP pathway for isoprenoid precursor biosynthesis. The protein is 4-hydroxy-3-methylbut-2-enyl diphosphate reductase of Bacillus thuringiensis (strain Al Hakam).